The chain runs to 806 residues: Protein translocase subunit SecA (806 aa).

ATP-binding positions include glutamine 87, 105–109, and aspartate 493; that span reads GEGKT.

This sequence belongs to the SecA family. As to quaternary structure, monomer and homodimer. Part of the essential Sec protein translocation apparatus which comprises SecA, SecYEG and auxiliary proteins SecDF. Other proteins may also be involved.

The protein localises to the cell membrane. It is found in the cytoplasm. It catalyses the reaction ATP + H2O + cellular proteinSide 1 = ADP + phosphate + cellular proteinSide 2.. Functionally, part of the Sec protein translocase complex. Interacts with the SecYEG preprotein conducting channel. Has a central role in coupling the hydrolysis of ATP to the transfer of proteins into and across the cell membrane, serving as an ATP-driven molecular motor driving the stepwise translocation of polypeptide chains across the membrane. The protein is Protein translocase subunit SecA of Mycoplasma genitalium (strain ATCC 33530 / DSM 19775 / NCTC 10195 / G37) (Mycoplasmoides genitalium).